The primary structure comprises 426 residues: Pannexin-1 (426 aa).

At 1–40 the chain is on the cytoplasmic side; it reads MAIAHLATEYVFSDFLLKEPTEPKFKGLRLELAVDKMVTC. Residue Cys40 is modified to S-nitrosocysteine. The helical transmembrane segment at 41 to 61 threads the bilayer; it reads IAVGLPLLLISLAFAQEISIG. Residues 62–106 are Extracellular-facing; sequence TQISCFSPSSFSWRQAAFVDSYCWAAVQQKSSLQSESGNLPLWLH. Intrachain disulfides connect Cys66–Cys264 and Cys84–Cys245. The helical transmembrane segment at 107–127 threads the bilayer; it reads KFFPYILLLFAILLYLPALFW. The Cytoplasmic segment spans residues 128–216; sequence RFSAAPHLCS…HLIMKYISCR (89 aa). Position 198 is a phosphotyrosine (Tyr198). A helical transmembrane segment spans residues 217 to 237; it reads LVTFVVILLACIYLSYYFSLS. Over 238–277 the chain is Extracellular; the sequence is SLSDEFLCSIKSGVLKNDSTIPDRFQCKLIAVGIFQLLSL. Asn254 carries N-linked (GlcNAc...) asparagine glycosylation. The chain crosses the membrane as a helical span at residues 278–298; it reads INLIVYALLIPVVVYTFFIPF. Topologically, residues 299-426 are cytoplasmic; the sequence is RQKTDILKVY…SRQRLLNPSC (128 aa). At Cys346 the chain carries S-nitrosocysteine.

It belongs to the pannexin family. In terms of assembly, homoheptameric. In terms of processing, S-nitrosylation inhibits channel currents and ATP release. Post-translationally, N-glycosylation may play a role in cell surface targeting. Exists in three glycosylation states: non-glycosylated (GLY0), high-mannose glycosylated (GLY1), and fully mature glycosylated (GLY2). Phosphorylated at Tyr-198 by SRC. Phosphorylation activates ATP release. Constitutively phosphorylated in vascular smooth muscle cells. In terms of processing, cleaved by CASP3 and CASP7 during apoptosis. Cleavage opens the channel for the release of metabolites and induces plasma membrane permeability during apoptosis. In terms of tissue distribution, widely expressed, including in cartilage, skin, spleen and brain.

Its subcellular location is the cell membrane. The protein localises to the endoplasmic reticulum membrane. It catalyses the reaction chloride(in) = chloride(out). It carries out the reaction iodide(out) = iodide(in). The catalysed reaction is Ca(2+)(in) = Ca(2+)(out). The enzyme catalyses ATP(in) = ATP(out). It catalyses the reaction K(+)(in) = K(+)(out). It carries out the reaction Na(+)(in) = Na(+)(out). The catalysed reaction is nitrate(in) = nitrate(out). The enzyme catalyses L-aspartate(out) = L-aspartate(in). It catalyses the reaction L-glutamate(out) = L-glutamate(in). It carries out the reaction D-gluconate(in) = D-gluconate(out). The catalysed reaction is spermidine(in) = spermidine(out). In terms of biological role, ion channel involved in a variety of physiological functions such as blood pressure regulation, apoptotic cell clearance and oogenesis. Forms anion-selective channels with relatively low conductance and an order of permeabilities: nitrate&gt;iodide&gt;chlroride&gt;&gt;aspartate=glutamate=gluconate. Can release ATP upon activation through phosphorylation or cleavage at C-terminus. May play a role as a Ca(2+)-leak channel to regulate ER Ca(2+) homeostasis. During apoptosis and after cleavage by caspases of the C-terminal tail, acts as a plasma membrane channel which mediates the regulated release of find-me signals, such as nucleotides ATP and UTP, and selective plasme membrane permeability. This Mus musculus (Mouse) protein is Pannexin-1.